A 428-amino-acid polypeptide reads, in one-letter code: Enolase (428 aa).

Gln163 contacts (2R)-2-phosphoglycerate. Glu205 acts as the Proton donor in catalysis. Residues Asp242, Glu286, and Asp313 each coordinate Mg(2+). Residues Lys338, Arg367, Ser368, and Lys389 each contribute to the (2R)-2-phosphoglycerate site. Catalysis depends on Lys338, which acts as the Proton acceptor.

The protein belongs to the enolase family. The cofactor is Mg(2+).

It is found in the cytoplasm. Its subcellular location is the secreted. It localises to the cell surface. It catalyses the reaction (2R)-2-phosphoglycerate = phosphoenolpyruvate + H2O. Its pathway is carbohydrate degradation; glycolysis; pyruvate from D-glyceraldehyde 3-phosphate: step 4/5. Its function is as follows. Catalyzes the reversible conversion of 2-phosphoglycerate (2-PG) into phosphoenolpyruvate (PEP). It is essential for the degradation of carbohydrates via glycolysis. The sequence is that of Enolase from Acidovorax sp. (strain JS42).